We begin with the raw amino-acid sequence, 66 residues long: uncharacterized protein (66 aa).

Transmembrane regions (helical) follow at residues 6-26 (KIIM…HFVG) and 39-59 (VTFF…SILL).

It localises to the cell membrane. This is an uncharacterized protein from Bacillus subtilis (strain 168).